The following is a 401-amino-acid chain: Argininosuccinate synthase (401 aa).

8 to 16 (AYSGGLDTS) lines the ATP pocket. Tyrosine 85 contributes to the L-citrulline binding site. Glycine 115 is an ATP binding site. Residues threonine 117, asparagine 121, and aspartate 122 each contribute to the L-aspartate site. Residue asparagine 121 coordinates L-citrulline. Residues arginine 125, serine 173, glutamate 258, and tyrosine 270 each coordinate L-citrulline.

This sequence belongs to the argininosuccinate synthase family. Type 1 subfamily. As to quaternary structure, homotetramer.

Its subcellular location is the cytoplasm. It catalyses the reaction L-citrulline + L-aspartate + ATP = 2-(N(omega)-L-arginino)succinate + AMP + diphosphate + H(+). The protein operates within amino-acid biosynthesis; L-arginine biosynthesis; L-arginine from L-ornithine and carbamoyl phosphate: step 2/3. This chain is Argininosuccinate synthase, found in Staphylococcus epidermidis (strain ATCC 35984 / DSM 28319 / BCRC 17069 / CCUG 31568 / BM 3577 / RP62A).